A 340-amino-acid polypeptide reads, in one-letter code: Glycerol-3-phosphate dehydrogenase [NAD(P)+] (340 aa).

NADPH contacts are provided by serine 13, tryptophan 14, and lysine 108. Sn-glycerol 3-phosphate is bound by residues lysine 108, glycine 139, and serine 141. Alanine 143 is a binding site for NADPH. Lysine 194, aspartate 247, serine 257, arginine 258, and asparagine 259 together coordinate sn-glycerol 3-phosphate. The Proton acceptor role is filled by lysine 194. Arginine 258 is a binding site for NADPH. Residues valine 282 and glutamate 284 each coordinate NADPH.

It belongs to the NAD-dependent glycerol-3-phosphate dehydrogenase family.

The protein resides in the cytoplasm. It catalyses the reaction sn-glycerol 3-phosphate + NAD(+) = dihydroxyacetone phosphate + NADH + H(+). It carries out the reaction sn-glycerol 3-phosphate + NADP(+) = dihydroxyacetone phosphate + NADPH + H(+). It functions in the pathway membrane lipid metabolism; glycerophospholipid metabolism. In terms of biological role, catalyzes the reduction of the glycolytic intermediate dihydroxyacetone phosphate (DHAP) to sn-glycerol 3-phosphate (G3P), the key precursor for phospholipid synthesis. This chain is Glycerol-3-phosphate dehydrogenase [NAD(P)+], found in Streptococcus thermophilus (strain ATCC BAA-491 / LMD-9).